Here is a 294-residue protein sequence, read N- to C-terminus: Dof zinc finger protein DOF4.1 (294 aa).

Residues 68–122 (RNCPRCNSSNTKFCYYNNYSLAQPRYLCKSCRRYWTEGGSLRNVPVGGGSRKNKK) form a Dof-type zinc finger. Residues C70, C73, C95, and C98 each coordinate Zn(2+). 2 disordered regions span residues 109 to 178 (RNVP…DKRA) and 247 to 294 (MYPY…GPTW). 2 stretches are compositionally biased toward polar residues: residues 126-136 (PNSSTSSSTKN) and 157-173 (KTHQ…SSPM). Over residues 251 to 273 (GDHEDRQQHHHVRHDDGNKKREG) the composition is skewed to basic and acidic residues. Gly residues predominate over residues 284–294 (ILGGDSGGPTW).

The protein resides in the nucleus. Functionally, transcription factor that binds specifically to a 5'-AA[AG]G-3' consensus core sequence. In Arabidopsis thaliana (Mouse-ear cress), this protein is Dof zinc finger protein DOF4.1 (DOF4.1).